Reading from the N-terminus, the 336-residue chain is Fructose-1,6-bisphosphatase class 1 (336 aa).

Residues E90, D112, L114, and D115 each coordinate Mg(2+). Substrate contacts are provided by residues D115–S118, N211, and K277. Residue E283 participates in Mg(2+) binding.

It belongs to the FBPase class 1 family. In terms of assembly, homotetramer. Mg(2+) is required as a cofactor.

It is found in the cytoplasm. It catalyses the reaction beta-D-fructose 1,6-bisphosphate + H2O = beta-D-fructose 6-phosphate + phosphate. The protein operates within carbohydrate biosynthesis; gluconeogenesis. The chain is Fructose-1,6-bisphosphatase class 1 from Pseudomonas aeruginosa (strain UCBPP-PA14).